The primary structure comprises 681 residues: Macrolide export ATP-binding/permease protein MacB (681 aa).

The region spanning 6 to 244 is the ABC transporter domain; it reads LKLAAVTRRF…FAEVGVGAAA (239 aa). 42 to 49 is a binding site for ATP; sequence GASGSGKS. Residues 246–273 show a composition bias toward low complexity; that stretch reads TETAADTRSAPASGDAPPPANNDTAADP. The interval 246–298 is disordered; that stretch reads TETAADTRSAPASGDAPPPANNDTAADPAPAPDASPPAPAVSPKHAGWRGSRS. The span at 274–285 shows a compositional bias: pro residues; it reads APAPDASPPAPA. The next 4 membrane-spanning stretches (helical) occupy residues 306 to 326, 554 to 574, 611 to 631, and 644 to 664; these read CLTM…VAVG, LTLL…IGVM, LVCL…GALF, and AGAI…FGFM.

It belongs to the ABC transporter superfamily. Macrolide exporter (TC 3.A.1.122) family. Homodimer.

Its subcellular location is the cell inner membrane. Non-canonical ABC transporter that contains transmembrane domains (TMD), which form a pore in the inner membrane, and an ATP-binding domain (NBD), which is responsible for energy generation. Confers resistance against macrolides. In Burkholderia orbicola (strain AU 1054), this protein is Macrolide export ATP-binding/permease protein MacB.